Consider the following 711-residue polypeptide: 1,4-alpha-glucan branching enzyme GlgB (711 aa).

The active-site Nucleophile is aspartate 392. Residue glutamate 443 is the Proton donor of the active site.

Belongs to the glycosyl hydrolase 13 family. GlgB subfamily. In terms of assembly, monomer.

The catalysed reaction is Transfers a segment of a (1-&gt;4)-alpha-D-glucan chain to a primary hydroxy group in a similar glucan chain.. Its pathway is glycan biosynthesis; glycogen biosynthesis. In terms of biological role, catalyzes the formation of the alpha-1,6-glucosidic linkages in glycogen by scission of a 1,4-alpha-linked oligosaccharide from growing alpha-1,4-glucan chains and the subsequent attachment of the oligosaccharide to the alpha-1,6 position. The sequence is that of 1,4-alpha-glucan branching enzyme GlgB from Corynebacterium jeikeium (strain K411).